A 196-amino-acid chain; its full sequence is Transcriptional regulatory protein UhpA (196 aa).

The 114-residue stretch at T3–A116 folds into the Response regulatory domain. Residue D54 is modified to 4-aspartylphosphate. The HTH luxR-type domain occupies A131–W196. The segment at residues V155–A174 is a DNA-binding region (H-T-H motif).

In terms of processing, phosphorylated and dephosphorylated by UhpB.

It is found in the cytoplasm. Phosphorylation by UhpB enhances DNA binding activity. Functionally, part of the UhpABC signaling cascade that controls the expression of the hexose phosphate transporter UhpT. Activates the transcription of the uhpT gene. Acts by binding specifically to the uhpT promoter region. This chain is Transcriptional regulatory protein UhpA (uhpA), found in Escherichia coli (strain K12).